Consider the following 411-residue polypeptide: Serpin A3-5 (411 aa).

A signal peptide spans 1 to 24 (MRAERTSFLLALGLLMAGIRSVHC). 5 N-linked (GlcNAc...) asparagine glycosylation sites follow: N100, N180, N230, N264, and N318.

This sequence belongs to the serpin family. As to quaternary structure, homodimer.

It localises to the cytoplasmic vesicle. The protein resides in the secretory vesicle. Its subcellular location is the chromaffin granule. It is found in the secreted. Its function is as follows. Serine protease inhibitor. This is Serpin A3-5 from Bos taurus (Bovine).